The following is a 190-amino-acid chain: Threonylcarbamoyl-AMP synthase (190 aa).

The 184-residue stretch at 7–190 (TGSIAAAVDL…ALTGELFRQG (184 aa)) folds into the YrdC-like domain.

This sequence belongs to the SUA5 family. TsaC subfamily.

Its subcellular location is the cytoplasm. It catalyses the reaction L-threonine + hydrogencarbonate + ATP = L-threonylcarbamoyladenylate + diphosphate + H2O. In terms of biological role, required for the formation of a threonylcarbamoyl group on adenosine at position 37 (t(6)A37) in tRNAs that read codons beginning with adenine. Catalyzes the conversion of L-threonine, HCO(3)(-)/CO(2) and ATP to give threonylcarbamoyl-AMP (TC-AMP) as the acyladenylate intermediate, with the release of diphosphate. This chain is Threonylcarbamoyl-AMP synthase, found in Salmonella choleraesuis (strain SC-B67).